The primary structure comprises 161 residues: Urease accessory protein UreE (161 aa).

It belongs to the UreE family.

The protein localises to the cytoplasm. Its function is as follows. Involved in urease metallocenter assembly. Binds nickel. Probably functions as a nickel donor during metallocenter assembly. This chain is Urease accessory protein UreE, found in Arthrobacter sp. (strain FB24).